Consider the following 128-residue polypeptide: KRAB domain-containing protein 1 (128 aa).

Positions 15 to 86 (VAFEDVAVYF…QPQGVLSRND (72 aa)) constitute a KRAB domain.

This Homo sapiens (Human) protein is KRAB domain-containing protein 1 (KRBOX1).